Here is a 256-residue protein sequence, read N- to C-terminus: Leucyl/phenylalanyl-tRNA--protein transferase (256 aa).

Belongs to the L/F-transferase family.

Its subcellular location is the cytoplasm. It catalyses the reaction N-terminal L-lysyl-[protein] + L-leucyl-tRNA(Leu) = N-terminal L-leucyl-L-lysyl-[protein] + tRNA(Leu) + H(+). The enzyme catalyses N-terminal L-arginyl-[protein] + L-leucyl-tRNA(Leu) = N-terminal L-leucyl-L-arginyl-[protein] + tRNA(Leu) + H(+). It carries out the reaction L-phenylalanyl-tRNA(Phe) + an N-terminal L-alpha-aminoacyl-[protein] = an N-terminal L-phenylalanyl-L-alpha-aminoacyl-[protein] + tRNA(Phe). In terms of biological role, functions in the N-end rule pathway of protein degradation where it conjugates Leu, Phe and, less efficiently, Met from aminoacyl-tRNAs to the N-termini of proteins containing an N-terminal arginine or lysine. This Hydrogenovibrio crunogenus (strain DSM 25203 / XCL-2) (Thiomicrospira crunogena) protein is Leucyl/phenylalanyl-tRNA--protein transferase.